We begin with the raw amino-acid sequence, 261 residues long: MALLQLERIGAQYPGAAAPVLADINLSLGPQQLLVALGPSGSGKTSLLNLIAGFIKPGSGRITLDGIPVEGPSAERGVVFQDDALLPWQNVLANVAFGLELAGVGRLERETRAREMLALVDLAGFDQRRIWQLSGGQRQRVGLARALAADPRILLMDEPFGALDAFTREQMQELLLQVWQRTAKPVFLITHDIEEAVFLATDLVLLAPNPGRIAEHLHLDFGRRYAAGESARAIKSDPRFIETREHVLASVFSQRTREQCV.

The ABC transporter domain occupies 4 to 233; sequence LQLERIGAQY…RYAAGESARA (230 aa). 38–45 provides a ligand contact to ATP; it reads GPSGSGKT.

This sequence belongs to the ABC transporter superfamily. Taurine importer (TC 3.A.1.17.1) family. As to quaternary structure, the complex is composed of two ATP-binding proteins (TauB), two transmembrane proteins (TauC) and a solute-binding protein (TauA).

It is found in the cell inner membrane. The enzyme catalyses taurine(out) + ATP + H2O = taurine(in) + ADP + phosphate + H(+). Functionally, part of the ABC transporter complex TauABC involved in taurine import. Responsible for energy coupling to the transport system. This Pseudomonas savastanoi pv. phaseolicola (strain 1448A / Race 6) (Pseudomonas syringae pv. phaseolicola (strain 1448A / Race 6)) protein is Taurine import ATP-binding protein TauB.